The sequence spans 218 residues: Ras-related protein Rab11D (218 aa).

20 to 27 (GDSGVGKS) serves as a coordination point for GTP. The Effector region motif lies at 42-50 (SKSTIGVEF). Residues 68–72 (DTAGQ) and 126–129 (NKSD) each bind GTP. S-geranylgeranyl cysteine attachment occurs at residues cysteine 215 and cysteine 216.

It belongs to the small GTPase superfamily. Rab family.

It is found in the cell membrane. The protein is Ras-related protein Rab11D (RAB11D) of Lotus japonicus (Lotus corniculatus var. japonicus).